Reading from the N-terminus, the 702-residue chain is MSFHHLCSSPSSLLHDPLPLCNLLSVYPKSTPRSFLSSYNPNSSHFHSRNLLQATHVSVQEAIPQSEKSKLVDVDLPIPEPTASKSYVWVNPKSPRASQLRRKSYDSRYSSLIKLAESLDACKPNEADVCDVITGFGGKLFEQDAVVTLNNMTNPETAPLVLNNLLETMKPSREVILYNVTMKVFRKSKDLEKSEKLFDEMLERGIKPDNATFTTIISCARQNGVPKRAVEWFEKMSSFGCEPDNVTMAAMIDAYGRAGNVDMALSLYDRARTEKWRIDAVTFSTLIRIYGVSGNYDGCLNIYEEMKALGVKPNLVIYNRLIDSMGRAKRPWQAKIIYKDLITNGFTPNWSTYAALVRAYGRARYGDDALAIYREMKEKGLSLTVILYNTLLSMCADNRYVDEAFEIFQDMKNCETCDPDSWTFSSLITVYACSGRVSEAEAALLQMREAGFEPTLFVLTSVIQCYGKAKQVDDVVRTFDQVLELGITPDDRFCGCLLNVMTQTPSEEIGKLIGCVEKAKPKLGQVVKMLVEEQNCEEGVFKKEASELIDSIGSDVKKAYLNCLIDLCVNLNKLERACEILQLGLEYDIYTGLQSKSATQWSLHLKSLSLGAALTALHVWMNDLSEAALESGEEFPPLLGINTGHGKHKYSDKGLAAVFESHLKELNAPFHEAPDKVGWFLTTSVAAKAWLESRRSAGGVSA.

The N-terminal 53 residues, 1–53, are a transit peptide targeting the chloroplast; it reads MSFHHLCSSPSSLLHDPLPLCNLLSVYPKSTPRSFLSSYNPNSSHFHSRNLLQ. PPR repeat units follow at residues 174 to 208, 209 to 243, 244 to 278, 279 to 313, 314 to 348, 349 to 383, 384 to 414, 420 to 454, and 455 to 489; these read EVIL…GIKP, DNAT…GCEP, DNVT…KWRI, DAVT…GVKP, NLVI…GFTP, NWST…GLSL, TVIL…MKNC, DSWT…GFEP, and TLFV…GITP. One can recognise a Smr domain in the interval 603–688; that stretch reads LHLKSLSLGA…WFLTTSVAAK (86 aa).

This sequence belongs to the PPR family. P subfamily. As to expression, expressed in leaves and flowers and at lower levels in stems and flower buds.

The protein localises to the plastid. The protein resides in the chloroplast. Its function is as follows. Involved in chloroplast RNA processing. Can bind RNA. Involved in chloroplast development. Involved in chloroplast ribosomal RNA (rRNA) processing and/or translation. Required for FtsH-mediated chloroplast biogenesis. Involved in translation and accumulation of chloroplast ATP synthase subunits. The sequence is that of Pentatricopeptide repeat-containing protein At4g16390, chloroplastic from Arabidopsis thaliana (Mouse-ear cress).